A 174-amino-acid polypeptide reads, in one-letter code: Peptidyl-prolyl cis-trans isomerase-like 1 (174 aa).

Residues 5-159 (SPTYVTFDTS…EEIKIHRARL (155 aa)) enclose the PPIase cyclophilin-type domain.

This sequence belongs to the cyclophilin-type PPIase family. PPIL1 subfamily.

It carries out the reaction [protein]-peptidylproline (omega=180) = [protein]-peptidylproline (omega=0). PPIases accelerate the folding of proteins. It catalyzes the cis-trans isomerization of proline imidic peptide bonds in oligopeptides. In Cryptococcus neoformans var. neoformans serotype D (strain B-3501A) (Filobasidiella neoformans), this protein is Peptidyl-prolyl cis-trans isomerase-like 1 (CYP1).